A 384-amino-acid polypeptide reads, in one-letter code: Secreted LysM effector LysM14 (384 aa).

The signal sequence occupies residues 1–35 (MGWSPRWKVMLRGIFNAMISIHILLSLLFAHIATA). The LysM domain maps to 64 to 112 (YTYTIQEGDTCAKLAQRYQVTTSNIETWNVGSWGWPGCAKIKQGDFVCL). Residues 185–220 (STTKSAASKTTTTSNPTTTSKTTITSKPTTTSKPTT) are disordered.

Belongs to the secreted LysM effector family.

It localises to the secreted. In terms of biological role, secreted LysM effector that might have a role in sequestration of chitin oligosaccharides (breakdown products of fungal cell walls that are released during invasion and act as triggers of host immunity) to dampen host defense. The chain is Secreted LysM effector LysM14 from Penicillium expansum (Blue mold rot fungus).